Reading from the N-terminus, the 347-residue chain is GTPase Obg (347 aa).

The Obg domain maps to 1-159; sequence MKFVDEATIK…RVLRLELKLL (159 aa). Residues 127–146 form a disordered region; it reads NTRYKTSTNRAPRQSKPGTP. Over residues 129 to 138 the composition is skewed to polar residues; that stretch reads RYKTSTNRAP. The 175-residue stretch at 160-334 folds into the OBG-type G domain; sequence ADVGLLGLPN…LMQAIMKYLE (175 aa). Residues 166-173, 191-195, 213-216, 284-287, and 315-317 each bind GTP; these read GLPNAGKS, FTTLY, DIPG, NKID, and SAA. Positions 173 and 193 each coordinate Mg(2+).

This sequence belongs to the TRAFAC class OBG-HflX-like GTPase superfamily. OBG GTPase family. In terms of assembly, monomer. Mg(2+) serves as cofactor.

The protein localises to the cytoplasm. In terms of biological role, an essential GTPase which binds GTP, GDP and possibly (p)ppGpp with moderate affinity, with high nucleotide exchange rates and a fairly low GTP hydrolysis rate. Plays a role in control of the cell cycle, stress response, ribosome biogenesis and in those bacteria that undergo differentiation, in morphogenesis control. This chain is GTPase Obg, found in Thioalkalivibrio sulfidiphilus (strain HL-EbGR7).